The primary structure comprises 258 residues: Type III pantothenate kinase (258 aa).

Residue Asp6–Val13 coordinates ATP. Residues Tyr100 and Gly107–Arg110 each bind substrate. Asp109 serves as the catalytic Proton acceptor. Position 129 (Asp129) interacts with K(+). Residue Thr132 participates in ATP binding. Thr184 provides a ligand contact to substrate.

This sequence belongs to the type III pantothenate kinase family. Homodimer. It depends on NH4(+) as a cofactor. Requires K(+) as cofactor.

It is found in the cytoplasm. It catalyses the reaction (R)-pantothenate + ATP = (R)-4'-phosphopantothenate + ADP + H(+). Its pathway is cofactor biosynthesis; coenzyme A biosynthesis; CoA from (R)-pantothenate: step 1/5. In terms of biological role, catalyzes the phosphorylation of pantothenate (Pan), the first step in CoA biosynthesis. This is Type III pantothenate kinase from Bacillus licheniformis (strain ATCC 14580 / DSM 13 / JCM 2505 / CCUG 7422 / NBRC 12200 / NCIMB 9375 / NCTC 10341 / NRRL NRS-1264 / Gibson 46).